We begin with the raw amino-acid sequence, 36 residues long: Light-harvesting protein B-1015 gamma chain (36 aa).

One of the components of the bacteriochlorophyll-protein complex in the chromatophore membrane. This chain is Light-harvesting protein B-1015 gamma chain, found in Blastochloris viridis (Rhodopseudomonas viridis).